The sequence spans 480 residues: Glycogen synthase 1 (480 aa).

An ADP-alpha-D-glucose-binding site is contributed by lysine 15.

The protein belongs to the glycosyltransferase 1 family. Bacterial/plant glycogen synthase subfamily.

The enzyme catalyses [(1-&gt;4)-alpha-D-glucosyl](n) + ADP-alpha-D-glucose = [(1-&gt;4)-alpha-D-glucosyl](n+1) + ADP + H(+). Its pathway is glycan biosynthesis; glycogen biosynthesis. Its function is as follows. Synthesizes alpha-1,4-glucan chains using ADP-glucose. This chain is Glycogen synthase 1 (glgA1), found in Rhizobium meliloti (strain 1021) (Ensifer meliloti).